Consider the following 928-residue polypeptide: Dual serine/threonine and tyrosine protein kinase (928 aa).

A compositionally biased stretch (low complexity) spans 1 to 14 (MEGDGVPWGSEPES). Disordered regions lie at residues 1–22 (MEGD…GGGG) and 55–81 (LRGS…AGDV). Positions 394-430 (RKKENELYESLMNIANRKQEEMKDMIVETLNTMKEEL) form a coiled coil. In terms of domain architecture, Protein kinase spans 651–905 (PKLGQELGRG…PLLGIVQPML (255 aa)). Residues 657 to 665 (LGRGQYGVV) and Lys-680 contribute to the ATP site. Asp-776 acts as the Proton acceptor in catalysis.

The protein belongs to the protein kinase superfamily. Ser/Thr protein kinase family.

Its subcellular location is the cytoplasm. It localises to the cell membrane. The protein resides in the apical cell membrane. The protein localises to the basolateral cell membrane. It is found in the cell junction. The enzyme catalyses L-seryl-[protein] + ATP = O-phospho-L-seryl-[protein] + ADP + H(+). It catalyses the reaction L-threonyl-[protein] + ATP = O-phospho-L-threonyl-[protein] + ADP + H(+). It carries out the reaction L-tyrosyl-[protein] + ATP = O-phospho-L-tyrosyl-[protein] + ADP + H(+). Its function is as follows. Acts as a positive regulator of ERK phosphorylation downstream of fibroblast growth factor-receptor activation. Involved in the regulation of both caspase-dependent apoptosis and caspase-independent cell death. In the skin, it plays a predominant role in suppressing caspase-dependent apoptosis in response to UV stress in a range of dermal cell types. The polypeptide is Dual serine/threonine and tyrosine protein kinase (DSTYK) (Bos taurus (Bovine)).